The primary structure comprises 348 residues: Phosphate acyltransferase (348 aa).

Belongs to the PlsX family. In terms of assembly, homodimer. Probably interacts with PlsY.

Its subcellular location is the cytoplasm. It catalyses the reaction a fatty acyl-[ACP] + phosphate = an acyl phosphate + holo-[ACP]. Its pathway is lipid metabolism; phospholipid metabolism. Functionally, catalyzes the reversible formation of acyl-phosphate (acyl-PO(4)) from acyl-[acyl-carrier-protein] (acyl-ACP). This enzyme utilizes acyl-ACP as fatty acyl donor, but not acyl-CoA. The chain is Phosphate acyltransferase from Pectobacterium atrosepticum (strain SCRI 1043 / ATCC BAA-672) (Erwinia carotovora subsp. atroseptica).